A 79-amino-acid chain; its full sequence is Small ribosomal subunit protein bS16 (79 aa).

The protein belongs to the bacterial ribosomal protein bS16 family.

The protein is Small ribosomal subunit protein bS16 of Marinobacter nauticus (strain ATCC 700491 / DSM 11845 / VT8) (Marinobacter aquaeolei).